Here is a 162-residue protein sequence, read N- to C-terminus: Small ribosomal subunit protein uS19 (162 aa).

Over residues 1–27 (MAKQKKFSGKGSARSKRKQNRKQVGPR) the composition is skewed to basic residues. Residues 1 to 29 (MAKQKKFSGKGSARSKRKQNRKQVGPRRR) form a disordered region.

Belongs to the universal ribosomal protein uS19 family.

Its function is as follows. Protein S19 forms a complex with S13 that binds strongly to the 16S ribosomal RNA. This Methanococcus aeolicus (strain ATCC BAA-1280 / DSM 17508 / OCM 812 / Nankai-3) protein is Small ribosomal subunit protein uS19.